Reading from the N-terminus, the 426-residue chain is Histidine--tRNA ligase (426 aa).

It belongs to the class-II aminoacyl-tRNA synthetase family. Homodimer.

It localises to the cytoplasm. The enzyme catalyses tRNA(His) + L-histidine + ATP = L-histidyl-tRNA(His) + AMP + diphosphate + H(+). The protein is Histidine--tRNA ligase of Colwellia psychrerythraea (strain 34H / ATCC BAA-681) (Vibrio psychroerythus).